Here is a 215-residue protein sequence, read N- to C-terminus: Calmodulin-like protein 5 (215 aa).

The segment at 38–61 is disordered; it reads KNSPPSPSTMLPSPSSSSAPTKRI. Residues 45-57 are compositionally biased toward low complexity; sequence STMLPSPSSSSAP. 4 EF-hand domains span residues 61 to 96, 97 to 132, 139 to 174, and 177 to 212; these read IDPS…LGIY, IPDK…IVDE, TEEE…LGLK, and KTLD…GGFS. Residues Asp-74, Asn-76, Asp-78, Arg-80, Glu-85, Asp-110, Asn-112, Asp-114, Cys-116, Glu-121, Asp-152, Asp-154, Asp-156, Glu-163, Asp-190, Asp-192, Asp-194, Arg-196, and Glu-201 each contribute to the Ca(2+) site.

This sequence belongs to the calmodulin family.

Its function is as follows. Potential calcium sensor. This chain is Calmodulin-like protein 5 (CML5), found in Arabidopsis thaliana (Mouse-ear cress).